Reading from the N-terminus, the 1047-residue chain is Formin-like protein 3 (1047 aa).

Residue Gly2 is the site of N-myristoyl glycine attachment. The GBD/FH3 domain occupies 22-462 (VPMPDPTELE…AAFQRHNNIE (441 aa)). The tract at residues 520–561 (AVPVEAVAPPPPPPPPPPPPPPAPPLPSEVESIPIPPPPPPP) is disordered. Positions 527-546 (APPPPPPPPPPPPPPAPPLP) are enriched in pro residues. An FH2 domain is found at 580–970 (IKKPIKTKFR…MREKLLAQEA (391 aa)). The 38-residue stretch at 1000–1037 (DHRPVYEGKDGTIEDIITVLKSVPFTARTAKRGSRFFC) folds into the DAD domain.

This sequence belongs to the formin homology family.

The protein localises to the cytoplasm. It is found in the cell membrane. Required for developmental angiogenesis, but not for vasculogenesis. The polypeptide is Formin-like protein 3 (fmnl3) (Danio rerio (Zebrafish)).